A 508-amino-acid polypeptide reads, in one-letter code: NADH-quinone oxidoreductase subunit N 1 (508 aa).

13 helical membrane-spanning segments follow: residues 2 to 22 (ILGP…GALL), 47 to 67 (ALGT…VGFV), 87 to 107 (FTLF…LLAG), 126 to 146 (FSTV…LFLG), 175 to 195 (FLLG…IYGA), 220 to 240 (ALLL…VSAV), 260 to 280 (FMAV…LLGA), 291 to 311 (AGWP…ANLI), 321 to 341 (MLAY…AATV), 351 to 371 (VMFY…TLIL), 396 to 416 (ALAF…AGFF), 431 to 453 (YTLS…RVLV), and 479 to 499 (LVVS…SLGI).

Belongs to the complex I subunit 2 family. NDH-1 is composed of 14 different subunits. Subunits NuoA, H, J, K, L, M, N constitute the membrane sector of the complex.

The protein resides in the cell inner membrane. It carries out the reaction a quinone + NADH + 5 H(+)(in) = a quinol + NAD(+) + 4 H(+)(out). Its function is as follows. NDH-1 shuttles electrons from NADH, via FMN and iron-sulfur (Fe-S) centers, to quinones in the respiratory chain. The immediate electron acceptor for the enzyme in this species is believed to be ubiquinone. Couples the redox reaction to proton translocation (for every two electrons transferred, four hydrogen ions are translocated across the cytoplasmic membrane), and thus conserves the redox energy in a proton gradient. The chain is NADH-quinone oxidoreductase subunit N 1 from Sorangium cellulosum (strain So ce56) (Polyangium cellulosum (strain So ce56)).